The sequence spans 179 residues: Large ribosomal subunit protein uL6 (179 aa).

Belongs to the universal ribosomal protein uL6 family. As to quaternary structure, part of the 50S ribosomal subunit.

Its function is as follows. This protein binds to the 23S rRNA, and is important in its secondary structure. It is located near the subunit interface in the base of the L7/L12 stalk, and near the tRNA binding site of the peptidyltransferase center. In Saccharopolyspora erythraea (strain ATCC 11635 / DSM 40517 / JCM 4748 / NBRC 13426 / NCIMB 8594 / NRRL 2338), this protein is Large ribosomal subunit protein uL6.